Reading from the N-terminus, the 1342-residue chain is DNA-directed RNA polymerase subunit beta (1342 aa).

The protein belongs to the RNA polymerase beta chain family. As to quaternary structure, the RNAP catalytic core consists of 2 alpha, 1 beta, 1 beta' and 1 omega subunit. When a sigma factor is associated with the core the holoenzyme is formed, which can initiate transcription.

It carries out the reaction RNA(n) + a ribonucleoside 5'-triphosphate = RNA(n+1) + diphosphate. DNA-dependent RNA polymerase catalyzes the transcription of DNA into RNA using the four ribonucleoside triphosphates as substrates. The chain is DNA-directed RNA polymerase subunit beta from Pectobacterium carotovorum subsp. carotovorum (strain PC1).